A 480-amino-acid polypeptide reads, in one-letter code: MAIDYAQISCNLASIIEEDSVFLFLIDKLNNLDISRRKISFNFIRLCYTYYILIKFNSRFKDTFLARSFIDYMHQNISDFIDENVELSDLYSNIYVRLQDASPKVVKNLFKILERETRGQSTNPLWHAMRKNCITATKIYDIYISKSFSGIQEHSYLGDAVLYGIKHERIIEHLLKTFFVKKPWISKTLGLLLDPSSGVFGASIDSYYGISFNDNNLIEVGDKVVIFELKFRYKYLREKNDLFVSELLQNPSEIALAKFILSHPIPAIEYRENGKMPSAREYLITNNPLYDSGKKRRACLTPKNLTFDITRLIPMNEKNVSTAIIFDVVKDCILNTLVAYQKAIFTIDAFINPRHRYYFQSILQQYVMTQFYIQDHDNPENIEKENLPSVYIVSAIFRKREDDEKNCRLLIEDTEYLEEEIPLILLITPITIDAEFTSRVIKDICCIWENKIAQQTNLKIWAQSAVRQYMAASSARPKTP.

The protein belongs to the herpesviridae alkaline nuclease family. In terms of assembly, interacts with major DNA-binding protein; this interaction increases the nuclease processivity of the alkaline exonuclease.

Its subcellular location is the host nucleus. It is found in the host cytoplasm. Functionally, plays a role in processing non linear or branched viral DNA intermediates in order to promote the production of mature packaged unit-length linear progeny viral DNA molecules. Exhibits endonuclease and exonuclease activities and accepts both double-stranded and single-stranded DNA as substrate. Exonuclease digestion of DNA is in the 5'-&gt; 3' direction and the products are 5'-monophosphate nucleosides. Additionally, forms a recombinase with the major DNA-binding protein, which displays strand exchange activity. The polypeptide is Alkaline nuclease (U70) (Homo sapiens (Human)).